The chain runs to 109 residues: Parvalbumin alpha (109 aa).

2 consecutive EF-hand domains span residues 38 to 73 and 77 to 109; these read KTDAQVKEVFEILDKDQSGFIEEEELKGVLKGFSAH and LNDTETKALLAAGDSDHDGKIGADEFAKMVAQA. The Ca(2+) site is built by D51, D53, S55, E62, D90, D92, D94, K96, and E101.

This sequence belongs to the parvalbumin family.

In terms of biological role, in muscle, parvalbumin is thought to be involved in relaxation after contraction. It binds two calcium ions. The chain is Parvalbumin alpha from Triakis semifasciata (Leopard shark).